The following is an 862-amino-acid chain: Short transient receptor potential channel 7 (862 aa).

The segment at Met-1 to Gly-21 is disordered. Residues Met-1–Lys-351 are Cytoplasmic-facing. The span at Met-10 to Gly-21 shows a compositional bias: basic residues. Thr-15 is modified (phosphothreonine; by PKG/PRKG1). ANK repeat units follow at residues Pro-42–Phe-71, Met-77–Val-106, Asp-108–Gly-134, and His-163–Arg-192. The helical transmembrane segment at Phe-352–Ala-372 threads the bilayer. Residues Pro-373–Ser-383 lie on the Extracellular side of the membrane. The chain crosses the membrane as a helical span at residues Pro-384–Val-404. Over Asn-405 to Glu-465 the chain is Cytoplasmic. A helical membrane pass occupies residues Tyr-466 to Phe-486. Residues Thr-487–Gln-537 lie on the Extracellular side of the membrane. The N-linked (GlcNAc...) asparagine glycan is linked to Asn-514. A helical transmembrane segment spans residues Ile-538–Ile-558. Residues Leu-559–Lys-581 lie on the Cytoplasmic side of the membrane. The chain crosses the membrane as a helical span at residues Phe-582 to Ser-602. At Tyr-603–Val-651 the chain is on the extracellular side. A helical membrane pass occupies residues Leu-652–Ile-672. The Cytoplasmic segment spans residues Asn-673–Ile-862.

This sequence belongs to the transient receptor (TC 1.A.4) family. STrpC subfamily. TRPC7 sub-subfamily. As to quaternary structure, interacts with MX1 and RNF24. Interacts (via ANK-repeat domains) with PRKG1. Phosphorylation by PRKG1 at Thr-15 negatively regulates TRPC7 activity.

The protein resides in the cell membrane. It is found in the nucleus envelope. The enzyme catalyses Ca(2+)(in) = Ca(2+)(out). Its function is as follows. Forms a receptor-activated non-selective calcium permeant cation channel. Probably is operated by a phosphatidylinositol second messenger system activated by receptor tyrosine kinases or G-protein coupled receptors. Activated by diacylglycerol (DAG). May also be activated by intracellular calcium store depletion. This chain is Short transient receptor potential channel 7 (TRPC7), found in Homo sapiens (Human).